A 363-amino-acid chain; its full sequence is Chorismate synthase (363 aa).

Arginine 48 and arginine 54 together coordinate NADP(+). FMN-binding positions include arginine 125–serine 127, asparagine 237–alanine 238, glycine 277, lysine 292–serine 296, and arginine 318.

The protein belongs to the chorismate synthase family. As to quaternary structure, homotetramer. It depends on FMNH2 as a cofactor.

It catalyses the reaction 5-O-(1-carboxyvinyl)-3-phosphoshikimate = chorismate + phosphate. It functions in the pathway metabolic intermediate biosynthesis; chorismate biosynthesis; chorismate from D-erythrose 4-phosphate and phosphoenolpyruvate: step 7/7. Its function is as follows. Catalyzes the anti-1,4-elimination of the C-3 phosphate and the C-6 proR hydrogen from 5-enolpyruvylshikimate-3-phosphate (EPSP) to yield chorismate, which is the branch point compound that serves as the starting substrate for the three terminal pathways of aromatic amino acid biosynthesis. This reaction introduces a second double bond into the aromatic ring system. This chain is Chorismate synthase, found in Stutzerimonas stutzeri (strain A1501) (Pseudomonas stutzeri).